A 224-amino-acid polypeptide reads, in one-letter code: Putative gastrointestinal growth factor xP4 (224 aa).

The signal sequence occupies residues 1–17 (MANSVFWAIAVALVLGA). 4 P-type domains span residues 25–68 (YRCG…YTPW), 73–117 (TICN…YQPI), 123–167 (RDCS…FKPE), and 173–216 (LQCA…FYPD). 12 disulfide bridges follow: C27/C53, C37/C52, C47/C64, C75/C102, C86/C101, C96/C113, C125/C152, C136/C151, C146/C163, C175/C201, C185/C200, and C195/C212. N104 is a glycosylation site (N-linked (GlcNAc...) asparagine).

Post-translationally, glycosylated. In terms of tissue distribution, stomach mucosa.

It localises to the secreted. May act as a growth factor. The protein is Putative gastrointestinal growth factor xP4 (p4) of Xenopus laevis (African clawed frog).